The sequence spans 350 residues: Uroporphyrinogen decarboxylase (350 aa).

Substrate is bound by residues 23-27 (RQAGR), D72, Y149, S204, and H318.

It belongs to the uroporphyrinogen decarboxylase family. As to quaternary structure, homodimer.

Its subcellular location is the cytoplasm. The enzyme catalyses uroporphyrinogen III + 4 H(+) = coproporphyrinogen III + 4 CO2. The protein operates within porphyrin-containing compound metabolism; protoporphyrin-IX biosynthesis; coproporphyrinogen-III from 5-aminolevulinate: step 4/4. Catalyzes the decarboxylation of four acetate groups of uroporphyrinogen-III to yield coproporphyrinogen-III. This Carboxydothermus hydrogenoformans (strain ATCC BAA-161 / DSM 6008 / Z-2901) protein is Uroporphyrinogen decarboxylase.